Here is a 432-residue protein sequence, read N- to C-terminus: Glutamyl-tRNA reductase (432 aa).

Residues 49-52, S101, 106-108, and Q112 contribute to the substrate site; these read TCNR and ESQ. C50 serves as the catalytic Nucleophile. Residue 181 to 186 coordinates NADP(+); sequence GTGETI. Residues 410–432 form a disordered region; it reads KPGYHHPTLQTTIVKTDETDPAS.

It belongs to the glutamyl-tRNA reductase family. In terms of assembly, homodimer.

It carries out the reaction (S)-4-amino-5-oxopentanoate + tRNA(Glu) + NADP(+) = L-glutamyl-tRNA(Glu) + NADPH + H(+). Its pathway is porphyrin-containing compound metabolism; protoporphyrin-IX biosynthesis; 5-aminolevulinate from L-glutamyl-tRNA(Glu): step 1/2. Functionally, catalyzes the NADPH-dependent reduction of glutamyl-tRNA(Glu) to glutamate 1-semialdehyde (GSA). This chain is Glutamyl-tRNA reductase, found in Xylella fastidiosa (strain 9a5c).